Consider the following 206-residue polypeptide: VEL1-related protein YOR387C (206 aa).

The N-terminal stretch at 1 to 19 (MSFLNIFTFFSVLVSVATA) is a signal peptide. Residues asparagine 26, asparagine 48, asparagine 91, asparagine 139, asparagine 152, and asparagine 183 are each glycosylated (N-linked (GlcNAc...) asparagine).

Belongs to the VEL1 family. Post-translationally, N-glycosylated.

It localises to the cytoplasm. The protein resides in the cytosol. This Saccharomyces cerevisiae (strain ATCC 204508 / S288c) (Baker's yeast) protein is VEL1-related protein YOR387C.